The following is a 540-amino-acid chain: Glucose-6-phosphate isomerase (540 aa).

Glu-350 acts as the Proton donor in catalysis. Residues His-381 and Lys-503 contribute to the active site.

It belongs to the GPI family.

The protein localises to the cytoplasm. The enzyme catalyses alpha-D-glucose 6-phosphate = beta-D-fructose 6-phosphate. The protein operates within carbohydrate biosynthesis; gluconeogenesis. It participates in carbohydrate degradation; glycolysis; D-glyceraldehyde 3-phosphate and glycerone phosphate from D-glucose: step 2/4. Functionally, catalyzes the reversible isomerization of glucose-6-phosphate to fructose-6-phosphate. The sequence is that of Glucose-6-phosphate isomerase from Paraburkholderia phytofirmans (strain DSM 17436 / LMG 22146 / PsJN) (Burkholderia phytofirmans).